A 195-amino-acid polypeptide reads, in one-letter code: COMM domain-containing protein 3 (195 aa).

Positions 124–193 constitute a COMM domain; that stretch reads HITDVSWRLE…DASKSLERAT (70 aa).

The protein belongs to the COMM domain-containing protein 3 family. As to quaternary structure, component of the commander complex consisting of the CCC subcomplex and the retriever subcomplex. Component of the CCC (COMMD/CCDC22/CCDC93) subcomplex consisting of COMMD1, COMMD2, COMMD3, COMMD4, COMMD5, COMMD6, COMMD7, COMMD8, COMMD9, COMMD10, CCDC22 and CCDC93; within the complex forms a heterodimer with COMMD2. Interacts with NFKB1/p105. Interacts with CCDC22, CCDC93, SCNN1B, CUL3, CUL4A, CUL4B, CUL5. Widely expressed with highest expression in thymus.

It is found in the cytoplasm. Its subcellular location is the nucleus. Its function is as follows. Scaffold protein in the commander complex that is essential for endosomal recycling of transmembrane cargos; the commander complex is composed of the CCC subcomplex and the retriever subcomplex. May modulate activity of cullin-RING E3 ubiquitin ligase (CRL) complexes. May down-regulate activation of NF-kappa-B. Modulates Na(+) transport in epithelial cells by regulation of apical cell surface expression of amiloride-sensitive sodium channel (ENaC) subunits. The polypeptide is COMM domain-containing protein 3 (COMMD3) (Homo sapiens (Human)).